The chain runs to 136 residues: Small ribosomal subunit protein eS17B (136 aa).

Belongs to the eukaryotic ribosomal protein eS17 family. In terms of assembly, component of the small ribosomal subunit (SSU). Mature yeast ribosomes consist of a small (40S) and a large (60S) subunit. The 40S small subunit contains 1 molecule of ribosomal RNA (18S rRNA) and 33 different proteins (encoded by 57 genes). The large 60S subunit contains 3 rRNA molecules (25S, 5.8S and 5S rRNA) and 46 different proteins (encoded by 81 genes).

Its subcellular location is the cytoplasm. In terms of biological role, component of the ribosome, a large ribonucleoprotein complex responsible for the synthesis of proteins in the cell. The small ribosomal subunit (SSU) binds messenger RNAs (mRNAs) and translates the encoded message by selecting cognate aminoacyl-transfer RNA (tRNA) molecules. The large subunit (LSU) contains the ribosomal catalytic site termed the peptidyl transferase center (PTC), which catalyzes the formation of peptide bonds, thereby polymerizing the amino acids delivered by tRNAs into a polypeptide chain. The nascent polypeptides leave the ribosome through a tunnel in the LSU and interact with protein factors that function in enzymatic processing, targeting, and the membrane insertion of nascent chains at the exit of the ribosomal tunnel. This Saccharomyces cerevisiae (strain ATCC 204508 / S288c) (Baker's yeast) protein is Small ribosomal subunit protein eS17B.